A 1433-amino-acid polypeptide reads, in one-letter code: DNA-directed RNA polymerase subunit beta' (1433 aa).

Zn(2+) is bound by residues Cys66, Cys68, Cys81, and Cys84. The interval 328-347 is disordered; sequence RKSSAVKTDSNRPLKSLSDS. Residues 329–346 are compositionally biased toward polar residues; sequence KSSAVKTDSNRPLKSLSD. Mg(2+)-binding residues include Asp477, Asp479, and Asp481. The Zn(2+) site is built by Cys825, Cys899, Cys906, and Cys909.

It belongs to the RNA polymerase beta' chain family. The RNAP catalytic core consists of 2 alpha, 1 beta, 1 beta' and 1 omega subunit. When a sigma factor is associated with the core the holoenzyme is formed, which can initiate transcription. Mg(2+) is required as a cofactor. Requires Zn(2+) as cofactor.

It carries out the reaction RNA(n) + a ribonucleoside 5'-triphosphate = RNA(n+1) + diphosphate. DNA-dependent RNA polymerase catalyzes the transcription of DNA into RNA using the four ribonucleoside triphosphates as substrates. This Christiangramia forsetii (strain DSM 17595 / CGMCC 1.15422 / KT0803) (Gramella forsetii) protein is DNA-directed RNA polymerase subunit beta'.